Reading from the N-terminus, the 252-residue chain is Sulfoacetaldehyde reductase 2 (252 aa).

Position 6–30 (6–30 (LITGATSGFGRAAARRFADAGWSLI)) interacts with NADP(+). Serine 139 is a substrate binding site. Tyrosine 152 (proton acceptor) is an active-site residue.

It belongs to the short-chain dehydrogenases/reductases (SDR) family. Homodimer and heterotetramer.

It carries out the reaction 2-hydroxyethane-1-sulfonate + NADP(+) = sulfoacetaldehyde + NADPH + H(+). It participates in organosulfur degradation. In terms of biological role, catalyzes the formation of isethionate from 2-sulfoacetaldehyde in the deaminative pathway of taurine. Constitutively expressed enzyme that only mediates a small part of the activity observed in taurine-grown cells. The protein is Sulfoacetaldehyde reductase 2 (isfD2) of Chromohalobacter salexigens (strain ATCC BAA-138 / DSM 3043 / CIP 106854 / NCIMB 13768 / 1H11).